Here is a 426-residue protein sequence, read N- to C-terminus: Enolase (426 aa).

Gln-163 contacts (2R)-2-phosphoglycerate. Glu-205 (proton donor) is an active-site residue. Mg(2+) contacts are provided by Asp-242, Glu-286, and Asp-313. Lys-338, Arg-367, Ser-368, and Lys-389 together coordinate (2R)-2-phosphoglycerate. The active-site Proton acceptor is Lys-338.

Belongs to the enolase family. Mg(2+) is required as a cofactor.

The protein localises to the cytoplasm. It is found in the secreted. Its subcellular location is the cell surface. It carries out the reaction (2R)-2-phosphoglycerate = phosphoenolpyruvate + H2O. Its pathway is carbohydrate degradation; glycolysis; pyruvate from D-glyceraldehyde 3-phosphate: step 4/5. In terms of biological role, catalyzes the reversible conversion of 2-phosphoglycerate (2-PG) into phosphoenolpyruvate (PEP). It is essential for the degradation of carbohydrates via glycolysis. The chain is Enolase from Helicobacter pylori (strain Shi470).